The following is a 260-amino-acid chain: Ribosomal RNA small subunit methyltransferase J (260 aa).

Residues 125-126 (ER) and aspartate 179 each bind S-adenosyl-L-methionine. Positions 234 to 260 (IDGPKPSHALDGKSSRYDIYPKKALKP) are disordered. Residues 241–254 (HALDGKSSRYDIYP) show a composition bias toward basic and acidic residues.

It belongs to the methyltransferase superfamily. RsmJ family.

Its subcellular location is the cytoplasm. The catalysed reaction is guanosine(1516) in 16S rRNA + S-adenosyl-L-methionine = N(2)-methylguanosine(1516) in 16S rRNA + S-adenosyl-L-homocysteine + H(+). Its function is as follows. Specifically methylates the guanosine in position 1516 of 16S rRNA. The protein is Ribosomal RNA small subunit methyltransferase J of Pseudomonas fluorescens (strain SBW25).